The chain runs to 390 residues: Uroporphyrinogen decarboxylase 2, chloroplastic (390 aa).

The transit peptide at 1–30 (MATACPPLSLQPAYLSGRSARARRPPPAVR) directs the protein to the chloroplast. Substrate is bound by residues 70-74 (RQAGR), Phe-89, Ser-119, Asp-120, Tyr-197, Ser-252, and His-367.

This sequence belongs to the uroporphyrinogen decarboxylase family. In terms of assembly, homodimer.

It is found in the plastid. The protein resides in the chloroplast. The catalysed reaction is uroporphyrinogen III + 4 H(+) = coproporphyrinogen III + 4 CO2. The protein operates within porphyrin-containing compound metabolism; protoporphyrin-IX biosynthesis; coproporphyrinogen-III from 5-aminolevulinate: step 4/4. In terms of biological role, catalyzes the decarboxylation of four acetate groups of uroporphyrinogen-III to yield coproporphyrinogen-III. The chain is Uroporphyrinogen decarboxylase 2, chloroplastic from Oryza sativa subsp. japonica (Rice).